The chain runs to 21 residues: Granule-bound starch synthase 1 (21 aa).

This sequence belongs to the glycosyltransferase 1 family. Bacterial/plant glycogen synthase subfamily.

It localises to the plastid. The protein localises to the chloroplast. The protein resides in the amyloplast. It catalyses the reaction an NDP-alpha-D-glucose + [(1-&gt;4)-alpha-D-glucosyl](n) = [(1-&gt;4)-alpha-D-glucosyl](n+1) + a ribonucleoside 5'-diphosphate + H(+). The protein operates within glycan biosynthesis; starch biosynthesis. The protein is Granule-bound starch synthase 1 of Secale cereale (Rye).